The chain runs to 327 residues: 2-phosphoglycerate kinase (327 aa).

Over residues 1 to 20 (MSEKSSRKERDEKTEKETAR) the composition is skewed to basic and acidic residues. Residues 1–27 (MSEKSSRKERDEKTEKETARQGKHRRI) form a disordered region. The ATP-cone domain maps to 25–111 (RRIRVKSRHY…LWRRIKKREE (87 aa)).

Belongs to the 2-phosphoglycerate kinase family. It depends on a divalent metal cation as a cofactor.

The enzyme catalyses (2R)-2-phosphoglycerate + ATP = (2R)-2,3-bisphosphoglycerate + ADP + H(+). It functions in the pathway thermoadapter biosynthesis; cyclic 2,3-diphosphoglycerate biosynthesis; cyclic 2,3-diphosphoglycerate from 2-phospho-D-glycerate: step 1/2. Functionally, catalyzes the phosphorylation of 2-phosphoglycerate to 2,3-diphosphoglycerate. Involved in the biosynthesis of cyclic 2,3-bisphosphoglycerate, a thermoprotectant. The sequence is that of 2-phosphoglycerate kinase from Methanopyrus kandleri (strain AV19 / DSM 6324 / JCM 9639 / NBRC 100938).